A 258-amino-acid polypeptide reads, in one-letter code: Regulatory protein RecX (258 aa).

This sequence belongs to the RecX family.

Its subcellular location is the cytoplasm. Its function is as follows. Modulates RecA activity. The sequence is that of Regulatory protein RecX from Streptococcus pyogenes serotype M5 (strain Manfredo).